Consider the following 244-residue polypeptide: Phosphoadenosine 5'-phosphosulfate reductase (244 aa).

Residue Cys239 is the Nucleophile; cysteine thiosulfonate intermediate of the active site.

This sequence belongs to the PAPS reductase family. CysH subfamily.

It is found in the cytoplasm. It carries out the reaction [thioredoxin]-disulfide + sulfite + adenosine 3',5'-bisphosphate + 2 H(+) = [thioredoxin]-dithiol + 3'-phosphoadenylyl sulfate. It functions in the pathway sulfur metabolism; hydrogen sulfide biosynthesis; sulfite from sulfate: step 3/3. Functionally, catalyzes the formation of sulfite from phosphoadenosine 5'-phosphosulfate (PAPS) using thioredoxin as an electron donor. This is Phosphoadenosine 5'-phosphosulfate reductase from Serratia proteamaculans (strain 568).